A 362-amino-acid chain; its full sequence is Peptide chain release factor 1 (362 aa).

At glutamine 235 the chain carries N5-methylglutamine.

It belongs to the prokaryotic/mitochondrial release factor family. Methylated by PrmC. Methylation increases the termination efficiency of RF1.

It localises to the cytoplasm. Its function is as follows. Peptide chain release factor 1 directs the termination of translation in response to the peptide chain termination codons UAG and UAA. This Acinetobacter baumannii (strain AYE) protein is Peptide chain release factor 1.